We begin with the raw amino-acid sequence, 1862 residues long: Ankyrin-1 (1862 aa).

Residues 1 to 827 are 89 kDa domain; it reads MGFCKADAAT…DELVGSKAER (827 aa). ANK repeat units follow at residues 40 to 69, 73 to 102, 106 to 135, 139 to 168, 170 to 197, 201 to 230, 234 to 263, 267 to 296, 300 to 329, 333 to 362, 366 to 395, 399 to 428, 432 to 461, 465 to 494, 498 to 527, 531 to 560, 564 to 593, 597 to 626, 630 to 659, 663 to 692, 696 to 725, 729 to 758, and 762 to 791; these read NGLNGLHLASKEGHVKMVVELLHKEIILET, KGNTALHIAALAGQDEVVRELVNYGANVNA, KGFTPLYMAAQENHLEVVKFLLENGANQNV, DGFTPLAVALQQGHENVVAHLINYGTKGKV, LPALHIAARNDDTRTAAVLLQNDPNPDV, TGFTPLHIAAHYENLNVAQLLLNRGASVNF, NGITPLHIASRRGNVIMVRLLLDRGAQIET, DELTPLHCAARNGHVRISEILLDHGAPIQA, NGLSPIHMAAQGDHLDCVRLLLQYNAEIDD, DHLTPLHVAAHCGHHRVAKVLLDKGAKPNS, NGFTPLHIACKKNHIRVMELLLKTGASIDA, SGLTPLHVASFMGHLPIVKNLLQRGASPNV, KVETPLHMAARAGHTEVAKYLLQNKAKANA, DDQTPLHCAARIGHTGMVKLLLENGASPNL, AGHTPLHTAAREGHVDTALALLEKEASQAC, KGFTPLHVAAKYGKVRLAELLLEHDAHPNA, NGLTPLHVAVHHNNLDIVKLLLPRGGSPHS, NGYTPLHIAAKQNQIEVARSLLQYGGSANA, QGVTPLHLAAQEGHTEMVALLLSKQANGNL, SGLTPLHLVSQEGHVPVADVLIKHGVTVDA, MGYTPLHVASHYGNIKLVKFLLQHQADVNA, LGYSPLHQAAQQGHTDIVTLLLKNGASPNE, and NGTTPLAIAKRLGYISVTDVLKVVTDETSV. Phosphoserine is present on Lys55. At Asn101 the chain carries (3S)-3-hydroxyasparagine; by HIF1AN; partial. Residue Asn229 is modified to (3S)-3-hydroxyasparagine; by HIF1AN. A Phosphoserine modification is found at Ser425. Asn427 and Asn460 each carry (3S)-3-hydroxyasparagine; by HIF1AN. (3S)-3-hydroxyasparagine; by HIF1AN is present on residues Asn625 and Asn658. (3S)-3-hydroxyaspartate; by HIF1AN is present on Asp691. Asn724 bears the (3S)-3-hydroxyasparagine; by HIF1AN mark. Ser755 is modified (phosphoserine). Position 757 is a (3S)-3-hydroxyasparagine; by HIF1AN (Asn757). Residues Ser777, Ser813, Ser830, and Ser852 each carry the phosphoserine modification. Residues 812 to 834 are disordered; the sequence is VSEDEGDELVGSKAERRDSRDVG. The segment covering 824–834 has biased composition (basic and acidic residues); it reads KAERRDSRDVG. Phosphothreonine is present on Thr862. The interval 872 to 900 is disordered; that stretch reads DQEQASKEYDEDSLIPSSPATETSDNISP. Residues 886–900 are compositionally biased toward polar residues; sequence IPSSPATETSDNISP. ZU5 domains are found at residues 909-1064 and 1066-1212; these read FLVS…IMSR and CQDY…LSDC. The residue at position 957 (Thr957) is a Phosphothreonine. The residue at position 1069 (Tyr1069) is a Phosphotyrosine. Ser1078 is modified (phosphoserine). Residues 1197–1331 are UPA domain; that stretch reads ANFTTNVSAR…PVKVRDSSRE (135 aa). 2 positions are modified to phosphothreonine: Thr1374 and Thr1376. Ser1386 and Ser1388 each carry phosphoserine. Residues 1387 to 1862 are 55 kDa regulatory domain; sequence ESRLGFTSDT…KRASLKRGKQ (476 aa). Residue Thr1396 is modified to Phosphothreonine. The 85-residue stretch at 1399 to 1483 folds into the Death domain; that stretch reads VEMRMAVIRE…EIVNMLEGSG (85 aa). Phosphoserine is present on residues Ser1424, Ser1473, and Ser1482. Residues 1481–1506 are disordered; it reads GSGRQSRNLKPERRHGDREYSLSPSQ. Residues 1489 to 1500 are compositionally biased toward basic and acidic residues; it reads LKPERRHGDREY. Phosphoserine occurs at positions 1519, 1529, and 1612. 2 disordered regions span residues 1598-1720 and 1744-1767; these read EGAH…GPHS and VSTREHVQRGPPETGSPKAGKEPS. Residues 1637–1647 are compositionally biased toward basic and acidic residues; sequence EGQRSEKKRQE. Positions 1648–1666 are enriched in polar residues; it reads VSGTEQDTETEVSLVSGQQ. Phosphoserine occurs at positions 1660, 1675, and 1685. A compositionally biased stretch (basic and acidic residues) spans 1681 to 1694; the sequence is VLDRSQARTLDWDK. The span at 1695–1720 shows a compositional bias: polar residues; that stretch reads QGSTAVHPQEATQSSWQEEVTQGPHS.

In terms of assembly, component of the ankyrin-1 complex in the erythrocyte, composed of ANK1, RHCE, RHAG, SLC4A1, EPB42, GYPA, GYPB and AQP1. Interacts with a number of integral membrane proteins and cytoskeletal proteins. Interacts (via N-terminus) with SPTB/spectrin (beta chain). Also interacts with TTN/titin. Isoform Mu17 interacts with OBSCN isoform 3/obscurin. Interacts with HIF1AN. Interacts (via ANK 1-5 repeats) with RHCE; this interaction mediates the primary membrane attachment site for ANK1. Interacts (via ANK 1-2 repeats) with AQP1 (via the N-terminal). Interacts (via ANK 1-13 repeats) with EPB42. Interacts directly with SLC4A1 (via the cytoplasmic domain); this interaction is mediated by the SLC4A1 Band 3-II and Band 3-III dimers. In terms of processing, regulated by phosphorylation. Acylated by palmitic acid group(s). Post-translationally, hydroxylated by HIF1AN at several asparagine and 1 aspartate residue within ANK repeat region; hydroxylation seems to increase the conformational stability of this region and may also modulate protein-protein interactions mediated by the ANK repeat region.

Its subcellular location is the cytoplasm. The protein resides in the cytoskeleton. The protein localises to the membrane. It localises to the sarcoplasmic reticulum. Functionally, component of the ankyrin-1 complex, a multiprotein complex involved in the stability and shape of the erythrocyte membrane. Attaches integral membrane proteins to cytoskeletal elements; binds to the erythrocyte membrane protein band 4.2, to Na-K ATPase, to the lymphocyte membrane protein GP85, and to the cytoskeletal proteins fodrin, tubulin, vimentin and desmin. Erythrocyte ankyrins also link spectrin (beta chain) to the cytoplasmic domain of the erythrocytes anion exchange protein; they retain most or all of these binding functions. This Mus musculus (Mouse) protein is Ankyrin-1.